The sequence spans 503 residues: Cytosolic carboxypeptidase 6 (503 aa).

The Peptidase M14 domain maps to 167 to 438 (YPYTYTRFQH…NVARTFLDYY (272 aa)). Zn(2+) contacts are provided by His-230, Glu-233, and His-328. Catalysis depends on Glu-401, which acts as the Proton donor/acceptor. Basic and acidic residues-rich tracts occupy residues 459-469 (IEVQRRKEKSP) and 487-503 (KGDKKSSVNHKDPSTPF). The disordered stretch occupies residues 459-503 (IEVQRRKEKSPPYKHPLLRGPASNYPNSKGDKKSSVNHKDPSTPF).

It belongs to the peptidase M14 family. Interacts with MYLK. The cofactor is Zn(2+).

Its subcellular location is the cytoplasm. The protein resides in the cytosol. It localises to the cytoskeleton. It is found in the microtubule organizing center. The protein localises to the centrosome. Its subcellular location is the centriole. The protein resides in the golgi apparatus. It localises to the cilium basal body. It catalyses the reaction (L-glutamyl)(n+1)-gamma-L-glutamyl-L-glutamyl-[protein] + H2O = (L-glutamyl)(n)-gamma-L-glutamyl-L-glutamyl-[protein] + L-glutamate. The catalysed reaction is C-terminal L-alpha-aminoacyl-L-glutamyl-L-glutamyl-[tubulin] + H2O = C-terminal L-alpha-aminoacyl-L-glutamyl-[tubulin] + L-glutamate. In terms of biological role, metallocarboxypeptidase that mediates protein deglutamylation of tubulin and non-tubulin target proteins. Catalyzes the removal of polyglutamate side chains present on the gamma-carboxyl group of glutamate residues within the C-terminal tail of tubulin protein. Specifically cleaves tubulin long-side-chains, while it is not able to remove the branching point glutamate. Also catalyzes the removal of polyglutamate residues from the carboxy-terminus of non-tubulin proteins such as MYLK. Mediates the deglutamylation of nucleotidyltransferase CGAS, leading to CGAS antiviral defense response activation. Involved in KLF4 deglutamylation which promotes KLF4 proteasome-mediated degradation, thereby negatively regulating cell pluripotency maintenance and embryogenesis. The protein is Cytosolic carboxypeptidase 6 of Homo sapiens (Human).